A 349-amino-acid polypeptide reads, in one-letter code: Rhodopsin (349 aa).

At 1 to 33 (TEGPYFYIPMSNATGVVRSPYEYPQYYLVYPAA) the chain is on the extracellular side. N12 is a glycosylation site (N-linked (GlcNAc...) asparagine). A helical transmembrane segment spans residues 34–58 (FAVLGAYMFFLIIFGFPVNFLTLYV). At 59–70 (TIEHKKLRTPLN) the chain is on the cytoplasmic side. Residues 71 to 93 (YILLNLAVADLFMVIGGFTTTIY) form a helical membrane-spanning segment. Over 94–107 (TSMHGYFVLGRLGC) the chain is Extracellular. The cysteines at positions 107 and 184 are disulfide-linked. A helical transmembrane segment spans residues 108 to 130 (NLEGFSATLGGMISLWSLVVLAV). The 'Ionic lock' involved in activated form stabilization signature appears at 131-133 (ERW). Residues 131 to 149 (ERWVVVCKPMSNFRFGENH) are Cytoplasmic-facing. A helical membrane pass occupies residues 150–170 (AIMGVTLTWAMGLACTVPPLV). Residues 171-199 (GWSRYIPEGMQCSCGIDYYTRAEGFNNES) are Extracellular-facing. The N-linked (GlcNAc...) asparagine glycan is linked to N197. Residues 200–221 (FVLYMFVCHFSFPLVVIFFCYG) traverse the membrane as a helical segment. The Cytoplasmic portion of the chain corresponds to 222–249 (RLLCAVKEAAAAQQESETTQRAEREVTR). A helical transmembrane segment spans residues 250-271 (MVILMVIGFLVCWLPYASVAWY). Over 272–283 (IFTHQGSEFGPL) the chain is Extracellular. The chain crosses the membrane as a helical span at residues 284 to 305 (FMTIPAFFAKSSAIYNPVIYIC). K293 is modified (N6-(retinylidene)lysine). Over 306 to 349 (LNKQFRQCMLTTLFCGKNPFEEEEGASSTKTEASSASSSSVSPA) the chain is Cytoplasmic. The S-palmitoyl cysteine moiety is linked to residue C320. The segment at 326 to 349 (EEEEGASSTKTEASSASSSSVSPA) is disordered. A compositionally biased stretch (low complexity) spans 331–349 (ASSTKTEASSASSSSVSPA).

This sequence belongs to the G-protein coupled receptor 1 family. Opsin subfamily. Phosphorylated on some or all of the serine and threonine residues present in the C-terminal region. Post-translationally, contains one covalently linked retinal chromophore.

Its subcellular location is the membrane. The protein localises to the cell projection. The protein resides in the cilium. It localises to the photoreceptor outer segment. Functionally, photoreceptor required for image-forming vision at low light intensity. While most salt water fish species use retinal as chromophore, most freshwater fish use 3-dehydroretinal, or a mixture of retinal and 3-dehydroretinal. Light-induced isomerization of 11-cis to all-trans retinal triggers a conformational change that activates signaling via G-proteins. Subsequent receptor phosphorylation mediates displacement of the bound G-protein alpha subunit by arrestin and terminates signaling. The sequence is that of Rhodopsin (rho) from Myripristis berndti (Bigscale soldierfish).